An 808-amino-acid chain; its full sequence is MFNPANQTHFSLSLDGLRHDLQVLEFSGHEGISRPYRFELELVSERAGLDLEALMHRPAFLAFTPQGQGVHGLVYGAAQGDAGKRLTRYRLTLVPHLAYLAQRNNQRIFQHLTVPQIVALILEEHGILADAYRFQLGTRYPEREYCVQYDESDLHFVQRLCAEEGIHFHFRHSAEAHLLVFGDDQTVFPRLGRPTAYVHDSGLVADEPVIKRFSLRLASRTTRTTRRDYDFEKPRLLLEAGNRPAADAPAEPDLEDYDYPGRFVDRQRGKLLSQRALERHRADRRLGEGVSDQPLLVSGHFLEIAEHPRAEWNDLWLLSEVFHEGKQPQVLEENVTSDTSASTDDFQQGYRNRFLATPWEVFFRPPLEHPKPRVLGSQTAVVTGPPGEEIHCDRYGRVRVQFHWDREGQGDDKSSCWLRVASGWAGNGYGGIVIPRVGMEVLVDFLEGDPDQPLVSGCVYHAAHPVPYELPANQTRSVFKSLSSPGGDGYNELRIEDRKGQEQIFVHAQRDWDENIEHDQKIRVGHERHDTVEANSYSEFKAEEHHTVHGERKVELKADDHLTVGDSQHVKLGRAYLARAGREIHLKAGQKMVIEADSELTVKAGGSFIRLDASGIAISGPLARINAGGAPGSGSGIAIKMPLTPGAADADVAGRPLQPANAGLHASDPKQNGEYRFDIRLQDIPGDEGFPLIHTPWRIVQGKEHNLVLEGESDEKGRLVLDDTQQRQLSNACERAPGDVWLVYPGQRIGIRPHREREGWDATRHALGALDFHDTLGGQRAPTPLEHQRGKLDSCCEGDLYSHLLAKD.

This sequence belongs to the VgrG protein family.

The protein localises to the secreted. Its function is as follows. Part of the H2 type VI secretion system (H2-T6SS) specialized secretion system, which delivers several virulence factors in both prokaryotic and eukaryotic cells during infection. Allows the delivery of the phospholipase effector PldA to target cells where it exerts its toxicity. The chain is Type VI secretion system spike protein VgrG4b from Pseudomonas aeruginosa (strain ATCC 15692 / DSM 22644 / CIP 104116 / JCM 14847 / LMG 12228 / 1C / PRS 101 / PAO1).